Reading from the N-terminus, the 57-residue chain is Small ribosomal subunit protein bS21 (57 aa).

The protein belongs to the bacterial ribosomal protein bS21 family.

The sequence is that of Small ribosomal subunit protein bS21 from Phytoplasma australiense.